Reading from the N-terminus, the 358-residue chain is Chorismate synthase (358 aa).

2 residues coordinate NADP(+): R46 and R52. FMN contacts are provided by residues 123 to 125, 239 to 240, G283, 298 to 302, and R324; these read RSS, NA, and KSVAT.

The protein belongs to the chorismate synthase family. In terms of assembly, homotetramer. FMNH2 is required as a cofactor.

It catalyses the reaction 5-O-(1-carboxyvinyl)-3-phosphoshikimate = chorismate + phosphate. It functions in the pathway metabolic intermediate biosynthesis; chorismate biosynthesis; chorismate from D-erythrose 4-phosphate and phosphoenolpyruvate: step 7/7. In terms of biological role, catalyzes the anti-1,4-elimination of the C-3 phosphate and the C-6 proR hydrogen from 5-enolpyruvylshikimate-3-phosphate (EPSP) to yield chorismate, which is the branch point compound that serves as the starting substrate for the three terminal pathways of aromatic amino acid biosynthesis. This reaction introduces a second double bond into the aromatic ring system. The sequence is that of Chorismate synthase from Parabacteroides distasonis (strain ATCC 8503 / DSM 20701 / CIP 104284 / JCM 5825 / NCTC 11152).